We begin with the raw amino-acid sequence, 273 residues long: Putative pyruvate, phosphate dikinase regulatory protein (273 aa).

149–156 (GPSRTSKT) is a binding site for ADP.

It belongs to the pyruvate, phosphate/water dikinase regulatory protein family. PDRP subfamily.

The enzyme catalyses N(tele)-phospho-L-histidyl/L-threonyl-[pyruvate, phosphate dikinase] + ADP = N(tele)-phospho-L-histidyl/O-phospho-L-threonyl-[pyruvate, phosphate dikinase] + AMP + H(+). It carries out the reaction N(tele)-phospho-L-histidyl/O-phospho-L-threonyl-[pyruvate, phosphate dikinase] + phosphate + H(+) = N(tele)-phospho-L-histidyl/L-threonyl-[pyruvate, phosphate dikinase] + diphosphate. In terms of biological role, bifunctional serine/threonine kinase and phosphorylase involved in the regulation of the pyruvate, phosphate dikinase (PPDK) by catalyzing its phosphorylation/dephosphorylation. The protein is Putative pyruvate, phosphate dikinase regulatory protein of Rickettsia typhi (strain ATCC VR-144 / Wilmington).